The chain runs to 544 residues: Tyrosine-protein kinase fynb (544 aa).

G2 carries the N-myristoyl glycine lipid modification. Residues C3 and C6 are each lipidated (S-palmitoyl cysteine). An SH3 domain is found at 89–150; the sequence is TGVTLFVALY…PSNYVAPVDS (62 aa). Positions 156–253 constitute an SH2 domain; that stretch reads WYFGKLGRKD…GLCCRLVVPC (98 aa). The 254-residue stretch at 278–531 folds into the Protein kinase domain; sequence LQLIKRLGNG…YLQAFLEDYF (254 aa). Residues 284–292 and K306 contribute to the ATP site; that span reads LGNGQFGEV. D397 acts as the Proton acceptor in catalysis. The residue at position 427 (Y427) is a Phosphotyrosine; by autocatalysis. A Phosphotyrosine modification is found at Y538.

The protein belongs to the protein kinase superfamily. Tyr protein kinase family. SRC subfamily. The cofactor is Mn(2+).

The protein localises to the cytoplasm. The enzyme catalyses L-tyrosyl-[protein] + ATP = O-phospho-L-tyrosyl-[protein] + ADP + H(+). Its activity is regulated as follows. Inhibited by phosphorylation of Tyr-538 by leukocyte common antigen and activated by dephosphorylation of this site. Its function is as follows. Tyrosine-protein kinase implicated in the control of cell growth. Plays a role in the regulation of intracellular calcium levels. Required in brain development and mature brain function with important roles in the regulation of axon growth, axon guidance, and neurite extension. Role in CNTN1-mediated signaling. In Danio rerio (Zebrafish), this protein is Tyrosine-protein kinase fynb (fynb).